The primary structure comprises 124 residues: Large ribosomal subunit protein bL12 (124 aa).

Belongs to the bacterial ribosomal protein bL12 family. Homodimer. Part of the ribosomal stalk of the 50S ribosomal subunit. Forms a multimeric L10(L12)X complex, where L10 forms an elongated spine to which 2 to 4 L12 dimers bind in a sequential fashion. Binds GTP-bound translation factors.

Functionally, forms part of the ribosomal stalk which helps the ribosome interact with GTP-bound translation factors. Is thus essential for accurate translation. The sequence is that of Large ribosomal subunit protein bL12 from Idiomarina loihiensis (strain ATCC BAA-735 / DSM 15497 / L2-TR).